A 361-amino-acid chain; its full sequence is tRNA(Ile)-lysidine synthase (361 aa).

Residue 32 to 37 (SGGPDS) participates in ATP binding.

The protein belongs to the tRNA(Ile)-lysidine synthase family.

Its subcellular location is the cytoplasm. It catalyses the reaction cytidine(34) in tRNA(Ile2) + L-lysine + ATP = lysidine(34) in tRNA(Ile2) + AMP + diphosphate + H(+). Ligates lysine onto the cytidine present at position 34 of the AUA codon-specific tRNA(Ile) that contains the anticodon CAU, in an ATP-dependent manner. Cytidine is converted to lysidine, thus changing the amino acid specificity of the tRNA from methionine to isoleucine. The protein is tRNA(Ile)-lysidine synthase of Bradyrhizobium diazoefficiens (strain JCM 10833 / BCRC 13528 / IAM 13628 / NBRC 14792 / USDA 110).